Reading from the N-terminus, the 230-residue chain is Demethylmenaquinone methyltransferase (230 aa).

S-adenosyl-L-methionine contacts are provided by residues threonine 57, aspartate 77, and 101–102 (DI).

The protein belongs to the class I-like SAM-binding methyltransferase superfamily. MenG/UbiE family.

It catalyses the reaction a 2-demethylmenaquinol + S-adenosyl-L-methionine = a menaquinol + S-adenosyl-L-homocysteine + H(+). The protein operates within quinol/quinone metabolism; menaquinone biosynthesis; menaquinol from 1,4-dihydroxy-2-naphthoate: step 2/2. In terms of biological role, methyltransferase required for the conversion of demethylmenaquinol (DMKH2) to menaquinol (MKH2). The polypeptide is Demethylmenaquinone methyltransferase (Chlamydia pneumoniae (Chlamydophila pneumoniae)).